We begin with the raw amino-acid sequence, 277 residues long: Type II restriction enzyme RsrI (277 aa).

The protein belongs to the EcoRI type II restriction endonuclease family. In terms of assembly, homodimer. The cofactor is Mg(2+).

It catalyses the reaction Endonucleolytic cleavage of DNA to give specific double-stranded fragments with terminal 5'-phosphates.. Functionally, a P subtype restriction enzyme that recognizes the double-stranded sequence 5'-GAATTC-3' and cleaves after G-1. This Cereibacter sphaeroides (Rhodobacter sphaeroides) protein is Type II restriction enzyme RsrI (rsrIR).